The following is a 776-amino-acid chain: MASLIYRQLLTNSFTVDLSDEIETIGSEKNQNVTINPGPFAQIGYAPVDWGPGETNDSTTVEPVLDGPYKPTSFNPPTDYWMLLSPSSPGAVVEGTNNTDRWLATILIEPNVASTTRTYTIFGSKEAITVENTSQNKWKFIDLAKTSLTGSYSQYGILLSKPKLYAIMKRSGYLYTYSGETPDAITDYYTTTNYDSVNMTAYCDFYIIPWAQEALCTQYINNGLPPIQNTRNVVARPLSSRSIVVRRAQANEDVVISKASLWKEMQYNRDITIRFKFANAIIKSGGLGYKWSEISFKPANYQYTYTRDGEEVTAHTTCSVNGVNNFDFFGGALPTDFVISRYEVIKENSFVYVDYWDDSQAFRNMMYVRSLAADLNSVMCTGGVYEFSLPVGQWPAMTGGAVSLRAAGVTLSTQFTDFVSLNSLRFRFRLSVEEPSFSITRTRVSGLYGLPAANPNNGREYYEVAGRFSLISLVPSNDDHQTPIMNSVTVRQDLERQLSELRDEFNALSQEIAMSQLIDLALLPLDMFSMFSGIKATFDAVKSMATSVMKKFKKSGLASSVSTLTDSLSDAASSMSRSGSIRSISSNSSVWTDVSSTLYDLPSYMSTVSTQTATISKRLRLKEITAQTEGMNFDDISAAVLKTKIDRSAQITPNTLPDIVTEASEKFIPNRSYRILNNNEAFETSTDGRFFAYRVDTFEEIPFDVQKFADLVTDLPVISAIIDFKTLKNLNDNYGITREQAFNLIRSDPRVLREFINQDNPIIRNRIEQLIMQCRL.

Residues 65–224 (LDGPYKPTSF…LCTQYINNGL (160 aa)) form a spike head region. A disulfide bridge connects residues C203 and C216. The interval 248–479 (AQANEDVVIS…LISLVPSNDD (232 aa)) is spike body and stalk (antigen domain). Positions 308–310 (DGE) match the DGE motif; interaction with ITGA2/ITGB1 heterodimer motif. C318 and C380 are joined by a disulfide. Residues 389–409 (LPVGQWPAMTGGAVSLRAAGV) are hydrophobic; possible role in virus entry into host cell. The YGL motif; interaction with ITGA4 signature appears at 448–450 (YGL). Positions 484-511 (IMNSVTVRQDLERQLSELRDEFNALSQE) form a coiled coil. Residues 510-776 (QEIAMSQLID…IEQLIMQCRL (267 aa)) are spike foot. The KID motif; interaction with HSPA8 signature appears at 644–646 (KID).

Belongs to the rotavirus VP4 family. In terms of assembly, homotrimer. VP4 adopts a dimeric appearance above the capsid surface, while forming a trimeric base anchored inside the capsid layer. Only hints of the third molecule are observed above the capsid surface. It probably performs a series of molecular rearrangements during viral entry. Prior to trypsin cleavage, it is flexible. The priming trypsin cleavage triggers its rearrangement into rigid spikes with approximate two-fold symmetry of their protruding parts. After an unknown second triggering event, cleaved VP4 may undergo another rearrangement, in which two VP5* subunits fold back on themselves and join a third subunit to form a tightly associated trimer, shaped like a folded umbrella. Interacts with VP6. Interacts with VP7. Homotrimer. The trimer is coiled-coil stabilized by its C-terminus, however, its N-terminus, known as antigen domain or 'body', seems to be flexible allowing it to self-associate either as a dimer or a trimer. In terms of processing, proteolytic cleavage by trypsin results in activation of VP4 functions and greatly increases infectivity. The penetration into the host cell is dependent on trypsin treatment of VP4. It produces two peptides, VP5* and VP8* that remain associated with the virion. Cleavage of VP4 by trypsin probably occurs in vivo in the lumen of the intestine prior to infection of enterocytes. Trypsin seems to be incorporated into the three-layered viral particles but remains inactive as long as the viral outer capsid is intact and would only be activated upon the solubilization of the latter.

The protein resides in the virion. It is found in the host rough endoplasmic reticulum. The protein localises to the host cell membrane. It localises to the host cytoplasm. Its subcellular location is the host cytoskeleton. The protein resides in the host endoplasmic reticulum-Golgi intermediate compartment. Its function is as follows. Spike-forming protein that mediates virion attachment to the host epithelial cell receptors and plays a major role in cell penetration, determination of host range restriction and virulence. Rotavirus attachment and entry into the host cell probably involves multiple sequential contacts between the outer capsid proteins VP4 and VP7, and the cell receptors. It is subsequently lost, together with VP7, following virus entry into the host cell. Following entry into the host cell, low intracellular or intravesicular Ca(2+) concentration probably causes the calcium-stabilized VP7 trimers to dissociate from the virion. This step is probably necessary for the membrane-disrupting entry step and the release of VP4, which is locked onto the virion by VP7. During the virus exit from the host cell, VP4 seems to be required to target the newly formed virions to the host cell lipid rafts. In terms of biological role, forms the spike 'foot' and 'body' and acts as a membrane permeabilization protein that mediates release of viral particles from endosomal compartments into the cytoplasm. During entry, the part of VP5* that protrudes from the virus folds back on itself and reorganizes from a local dimer to a trimer. This reorganization may be linked to membrane penetration by exposing VP5* hydrophobic region. In integrin-dependent strains, VP5* targets the integrin heterodimer ITGA2/ITGB1 for cell attachment. Functionally, forms the head of the spikes and mediates the recognition of specific host cell surface glycans. It is the viral hemagglutinin and an important target of neutralizing antibodies. In sialic acid-dependent strains, VP8* binds to host cell sialic acid, most probably a ganglioside, providing the initial contact. In some other strains, VP8* mediates the attachment to histo-blood group antigens (HBGAs) for viral entry. This Rotavirus A (isolate RVA/Mouse/Brazil/EHP/1981/G16P[20]) (RV-A) protein is Outer capsid protein VP4.